Consider the following 213-residue polypeptide: uncharacterized protein (213 aa).

This is an uncharacterized protein from Acanthamoeba polyphaga (Amoeba).